The sequence spans 392 residues: Putative purine permease 19 (392 aa).

Basic and acidic residues predominate over residues 1 to 16 (MGFHTKSPDRVTHEEE). Positions 1 to 29 (MGFHTKSPDRVTHEEEANIGVDNQPRETT) are disordered. S30 is subject to Phosphoserine. The next 10 helical transmembrane spans lie at 46 to 66 (ICIF…TLLL), 88 to 108 (WLQS…LLLW), 128 to 148 (LFLL…LYAI), 154 to 174 (VFFL…TTII), 182 to 202 (WIIL…TSSG), 220 to 240 (WCAF…QLGF), 254 to 274 (VILM…VGLF), 300 to 320 (LIGL…LVCL), 325 to 345 (FSNV…VLAF), and 354 to 374 (FFKE…VYSL).

This sequence belongs to the purine permeases (TC 2.A.7.14) family.

The protein resides in the membrane. The chain is Putative purine permease 19 (PUP19) from Arabidopsis thaliana (Mouse-ear cress).